The sequence spans 898 residues: Translation initiation factor IF-2 (898 aa).

The disordered stretch occupies residues 51–302 (KEHGDATGSE…RKGRINKPMS (252 aa)). Basic and acidic residues-rich tracts occupy residues 100–164 (SSVE…KRET) and 171–230 (RSDE…KETV). The segment covering 234-245 (QENTDYHVTTSR) has biased composition (polar residues). Positions 263 to 273 (RRSTKANKRKM) are enriched in basic residues. Over residues 274 to 286 (SSRDDNQERDSRP) the composition is skewed to basic and acidic residues. The segment covering 287 to 297 (RGGKAGRKGRI) has biased composition (basic residues). Positions 397-566 (SRAPVVTIMG…LLQAEVLELK (170 aa)) constitute a tr-type G domain. Positions 406–413 (GHVDHGKT) are G1. Residue 406-413 (GHVDHGKT) participates in GTP binding. The tract at residues 431–435 (GITQH) is G2. Residues 452–455 (DTPG) are G3. Residues 452–456 (DTPGH) and 506–509 (NKID) contribute to the GTP site. Residues 506–509 (NKID) are G4. The interval 542–544 (SAK) is G5.

The protein belongs to the TRAFAC class translation factor GTPase superfamily. Classic translation factor GTPase family. IF-2 subfamily.

It is found in the cytoplasm. In terms of biological role, one of the essential components for the initiation of protein synthesis. Protects formylmethionyl-tRNA from spontaneous hydrolysis and promotes its binding to the 30S ribosomal subunits. Also involved in the hydrolysis of GTP during the formation of the 70S ribosomal complex. The protein is Translation initiation factor IF-2 of Vibrio cholerae serotype O1 (strain ATCC 39541 / Classical Ogawa 395 / O395).